A 119-amino-acid chain; its full sequence is Large ribosomal subunit protein uL18 (119 aa).

Belongs to the universal ribosomal protein uL18 family. Part of the 50S ribosomal subunit; part of the 5S rRNA/L5/L18/L25 subcomplex. Contacts the 5S and 23S rRNAs.

Its function is as follows. This is one of the proteins that bind and probably mediate the attachment of the 5S RNA into the large ribosomal subunit, where it forms part of the central protuberance. In Cupriavidus metallidurans (strain ATCC 43123 / DSM 2839 / NBRC 102507 / CH34) (Ralstonia metallidurans), this protein is Large ribosomal subunit protein uL18.